Reading from the N-terminus, the 845-residue chain is Dynein axonemal assembly factor 5 (845 aa).

HEAT repeat units lie at residues 47–84, 138–175, 180–217, 260–297, 332–369, 523–561, 674–715, and 766–803; these read DVFDKLYLHLLKCYEDRFESVRSKAIQVVSAFLSSLPP, ECYPLVVKILIKSIKDDYPVVQREGCSAVVTLSRLADT, PFTESILLPLYTMLNHKHAQARISAIQAIARLSLHMDA, SFFERILPLVLCCLKDESPEVLNHIYPQWLKCGIQYFN, QRSLRLLQLITRETSDWKDNVRLHALKLLYQFVLHAEA, NFGQTLIEKMVKLLNTSVPKIHERWFHLALQDVINLDAA, SESV…MSVE, and AIVKRAMDLLLLYHESPEKDMRAAVAVTLKVLAKSHPE.

It belongs to the DNAAF5 family. In terms of tissue distribution, expressed in testis.

It is found in the cytoplasm. It localises to the dynein axonemal particle. In terms of biological role, cytoplasmic protein involved in the delivery of the dynein machinery to the motile cilium. It is required for the assembly of the axonemal dynein inner and outer arms, two structures attached to the peripheral outer doublet A microtubule of the axoneme, that play a crucial role in cilium motility. The chain is Dynein axonemal assembly factor 5 from Drosophila melanogaster (Fruit fly).